The primary structure comprises 648 residues: Acetyl-coenzyme A synthetase (648 aa).

CoA is bound by residues 190 to 193 (RGGR) and Thr310. Residues 386 to 388 (GEP), 410 to 415 (DTWWQT), Asp499, and Arg514 contribute to the ATP site. Ser522 is a binding site for CoA. Arg525 is an ATP binding site. Mg(2+)-binding residues include Val536, His538, and Val541. Arg583 contacts CoA. Lys608 carries the post-translational modification N6-acetyllysine.

The protein belongs to the ATP-dependent AMP-binding enzyme family. Requires Mg(2+) as cofactor. Acetylated. Deacetylation by the SIR2-homolog deacetylase activates the enzyme.

It catalyses the reaction acetate + ATP + CoA = acetyl-CoA + AMP + diphosphate. Functionally, catalyzes the conversion of acetate into acetyl-CoA (AcCoA), an essential intermediate at the junction of anabolic and catabolic pathways. AcsA undergoes a two-step reaction. In the first half reaction, AcsA combines acetate with ATP to form acetyl-adenylate (AcAMP) intermediate. In the second half reaction, it can then transfer the acetyl group from AcAMP to the sulfhydryl group of CoA, forming the product AcCoA. The protein is Acetyl-coenzyme A synthetase of Methylobacterium radiotolerans (strain ATCC 27329 / DSM 1819 / JCM 2831 / NBRC 15690 / NCIMB 10815 / 0-1).